We begin with the raw amino-acid sequence, 113 residues long: Molt-inhibiting hormone (113 aa).

The N-terminal stretch at 1–35 (MMSLAHSKFSCQRTRLLAVVLLAALWSSSLQQAAA) is a signal peptide. 3 cysteine pairs are disulfide-bonded: Cys-42/Cys-79, Cys-59/Cys-75, and Cys-62/Cys-88.

Belongs to the arthropod CHH/MIH/GIH/VIH hormone family.

The protein localises to the secreted. Its function is as follows. Inhibits Y-organs where molting hormone (ecdysteroid) is secreted. A molting cycle is initiated when MIH secretion diminishes or stops. The polypeptide is Molt-inhibiting hormone (Callinectes sapidus (Blue crab)).